Reading from the N-terminus, the 81-residue chain is Putative membrane protein insertion efficiency factor (81 aa).

It belongs to the UPF0161 family.

The protein localises to the cell inner membrane. In terms of biological role, could be involved in insertion of integral membrane proteins into the membrane. The polypeptide is Putative membrane protein insertion efficiency factor (Pseudomonas savastanoi pv. phaseolicola (strain 1448A / Race 6) (Pseudomonas syringae pv. phaseolicola (strain 1448A / Race 6))).